Here is a 276-residue protein sequence, read N- to C-terminus: Natural cytotoxicity triggering receptor 2 (276 aa).

Positions 1–21 (MAWRALHPLLLLLLLFPGSQA) are cleaved as a signal peptide. One can recognise an Ig-like domain in the interval 22 to 120 (QSKAQVLQSV…IYRPSDNSVS (99 aa)). Topologically, residues 22-192 (QSKAQVLQSV…LRPGPAAPIA (171 aa)) are extracellular. 2 disulfide bridges follow: Cys40–Cys109 and Cys55–Cys63. Composition is skewed to polar residues over residues 138-156 (TSWT…QSCV) and 167-183 (ESPS…NSTL). Residues 138 to 184 (TSWTPRDLVSSQTQTQSCVPPTAGARQAPESPSTIPVPSQPQNSTLR) are disordered. A glycan (N-linked (GlcNAc...) asparagine) is linked at Asn180. The helical transmembrane segment at 193–213 (LVPVFCGLLVAKSLVLSALLV) threads the bilayer. The Cytoplasmic segment spans residues 214–276 (WWGDIWWKTM…ISDDDDEHTL (63 aa)).

Belongs to the natural cytotoxicity receptor (NCR) family. In terms of assembly, interacts with TYROBP/DAP12. Interacts with KMT2E isoform NKp44L. Selectively expressed by activated NK cells and by in vitro cultured (i.e. activated) TCRg/d lymphoid cells.

It is found in the cell membrane. Functionally, cytotoxicity-activating receptor that may contribute to the increased efficiency of activated natural killer (NK) cells to mediate tumor cell lysis. This is Natural cytotoxicity triggering receptor 2 (NCR2) from Homo sapiens (Human).